We begin with the raw amino-acid sequence, 135 residues long: Large ribosomal subunit protein bL19 (135 aa).

This sequence belongs to the bacterial ribosomal protein bL19 family.

In terms of biological role, this protein is located at the 30S-50S ribosomal subunit interface and may play a role in the structure and function of the aminoacyl-tRNA binding site. In Xanthomonas euvesicatoria pv. vesicatoria (strain 85-10) (Xanthomonas campestris pv. vesicatoria), this protein is Large ribosomal subunit protein bL19.